The following is a 196-amino-acid chain: MGSRSSHAAVIPDGDSIRRETGFSQASLLRLHHRFRALDRNKKGYLSRMDLQQIGALAVNPLGDRIIESFFPDGSQRVDFPGFVRVLAHFRPVEDEDTETQDPKKPEPLNSRRNKLHYAFQLYDLDRDGKISRHEMLQVLRLMVGVQVTEEQLENIADRTVQEADEDGDGAVSFVEFTKSLEKMDVEQKMSIRILK.

Glycine 2 carries N-myristoyl glycine lipidation. EF-hand domains lie at 26–61 (ASLL…AVNP), 71–106 (FPDG…PKKP), 111–146 (SRRN…MVGV), and 152–187 (QLEN…MDVE). Serine 27 carries the post-translational modification Phosphoserine. Residues aspartate 124, aspartate 126, aspartate 128, lysine 130, and glutamate 135 each coordinate Ca(2+). Residues 137–148 (LQVLRLMVGVQV) carry the Nuclear export signal motif. Aspartate 165, aspartate 167, aspartate 169, and glutamate 176 together coordinate Ca(2+).

Belongs to the calcineurin regulatory subunit family. CHP subfamily. As to quaternary structure, interacts with PPP3CA. Interacts with SLC9A1/NHE1; the interaction occurs in a calcium-dependent manner. Expressed in malignantly transformed cells but not detected in normal tissues.

It localises to the nucleus. It is found in the cytoplasm. The protein localises to the cell membrane. In terms of biological role, functions as an integral cofactor in cell pH regulation by controlling plasma membrane-type Na(+)/H(+) exchange activity. Binds to and activates SLC9A1/NHE1 in a serum-independent manner, thus increasing pH and protecting cells from serum deprivation-induced death. Also plays a role in the regulation of cell proliferation and tumor growth by increasing the phosphatase activity of PPP3CA in a calcium-dependent manner. Activator of the calcineurin/NFAT signaling pathway. Involved in the cytoplasmic translocation of the transcription factor NFATC3 to the nucleus. The chain is Calcineurin B homologous protein 2 (CHP2) from Homo sapiens (Human).